The primary structure comprises 513 residues: ATP synthase subunit alpha (513 aa).

169 to 176 (GDRQTGKT) contributes to the ATP binding site.

The protein belongs to the ATPase alpha/beta chains family. F-type ATPases have 2 components, CF(1) - the catalytic core - and CF(0) - the membrane proton channel. CF(1) has five subunits: alpha(3), beta(3), gamma(1), delta(1), epsilon(1). CF(0) has three main subunits: a(1), b(2) and c(9-12). The alpha and beta chains form an alternating ring which encloses part of the gamma chain. CF(1) is attached to CF(0) by a central stalk formed by the gamma and epsilon chains, while a peripheral stalk is formed by the delta and b chains.

The protein resides in the cell inner membrane. It catalyses the reaction ATP + H2O + 4 H(+)(in) = ADP + phosphate + 5 H(+)(out). Functionally, produces ATP from ADP in the presence of a proton gradient across the membrane. The alpha chain is a regulatory subunit. The sequence is that of ATP synthase subunit alpha from Salmonella arizonae (strain ATCC BAA-731 / CDC346-86 / RSK2980).